A 123-amino-acid polypeptide reads, in one-letter code: Non-specific lipid-transfer protein 3 (123 aa).

The N-terminal stretch at Met-1–Pro-25 is a signal peptide. 4 disulfides stabilise this stretch: Cys-33-Cys-80, Cys-43-Cys-57, Cys-58-Cys-105, and Cys-78-Cys-119.

Belongs to the plant LTP family.

Its function is as follows. Plant non-specific lipid-transfer proteins transfer phospholipids as well as galactolipids across membranes. May play a role in wax or cutin deposition in the cell walls of expanding epidermal cells and certain secretory tissues. This is Non-specific lipid-transfer protein 3 from Prunus dulcis (Almond).